A 395-amino-acid chain; its full sequence is MAQLETRTEPMVVNFGPHHPSMHGVLRLVVTLDGENVIDCEPVIGYLHRGMEKIAENRTNVMYVPYVSRMDYAAGMFYEAIVVNAPERLANIVVPKRASYIRVLMLELNRIANHLLWLGPFLADVGAQTPFFYIFREREMIYDLWEAATGQRLINNNFFRIGGVACDLPYGWLEKCIDFCDWFAPKIDEYEKLITNNPIFKKRIEGLGTIERDQAINWSLSGPMLRASGVSWDLRKVDSYECYDDFEWEIASEKEGDCYARYRVRVQEMRQSLKIIRQACEMIPGGPTENLEAKRMATEDKKSEIFGMDYQYVAKKVAPTFKIPNGELYTRLESGKGEIGVFIQGNNEVTPWRFKIRAADLNNLQILPHILKGAKIADIMAILGSIDVIMGSVDR.

It belongs to the complex I 49 kDa subunit family. As to quaternary structure, NDH-1 can be composed of about 15 different subunits; different subcomplexes with different compositions have been identified which probably have different functions.

The protein resides in the cellular thylakoid membrane. The catalysed reaction is a plastoquinone + NADH + (n+1) H(+)(in) = a plastoquinol + NAD(+) + n H(+)(out). It catalyses the reaction a plastoquinone + NADPH + (n+1) H(+)(in) = a plastoquinol + NADP(+) + n H(+)(out). Its function is as follows. NDH-1 shuttles electrons from an unknown electron donor, via FMN and iron-sulfur (Fe-S) centers, to quinones in the respiratory and/or the photosynthetic chain. The immediate electron acceptor for the enzyme in this species is believed to be plastoquinone. Couples the redox reaction to proton translocation, and thus conserves the redox energy in a proton gradient. Cyanobacterial NDH-1 also plays a role in inorganic carbon-concentration. The polypeptide is NAD(P)H-quinone oxidoreductase subunit H (Prochlorococcus marinus subsp. pastoris (strain CCMP1986 / NIES-2087 / MED4)).